A 79-amino-acid chain; its full sequence is Acyl carrier protein (79 aa).

The Carrier domain occupies 2 to 77 (SEVAEKVKKI…DAIDYIEKKK (76 aa)). An O-(pantetheine 4'-phosphoryl)serine modification is found at Ser-37.

Belongs to the acyl carrier protein (ACP) family. Post-translationally, 4'-phosphopantetheine is transferred from CoA to a specific serine of apo-ACP by AcpS. This modification is essential for activity because fatty acids are bound in thioester linkage to the sulfhydryl of the prosthetic group.

It is found in the cytoplasm. Its pathway is lipid metabolism; fatty acid biosynthesis. In terms of biological role, carrier of the growing fatty acid chain in fatty acid biosynthesis. The sequence is that of Acyl carrier protein from Acidiphilium cryptum (strain JF-5).